The sequence spans 211 residues: Ribonuclease HII (211 aa).

Residues 2 to 211 form the RNase H type-2 domain; the sequence is MLILGVDEAG…TAQRLKASSV (210 aa). A divalent metal cation is bound by residues D8, E9, and D106.

The protein belongs to the RNase HII family. Requires Mn(2+) as cofactor. It depends on Mg(2+) as a cofactor.

It is found in the cytoplasm. It catalyses the reaction Endonucleolytic cleavage to 5'-phosphomonoester.. Functionally, endonuclease that specifically degrades the RNA of RNA-DNA hybrids. The chain is Ribonuclease HII from Methanothrix thermoacetophila (strain DSM 6194 / JCM 14653 / NBRC 101360 / PT) (Methanosaeta thermophila).